A 114-amino-acid polypeptide reads, in one-letter code: Large ribosomal subunit protein P2 (114 aa).

The segment covering 74 to 83 (AAAAGGGGGD) has biased composition (gly residues). Positions 74-114 (AAAAGGGGGDAPAAAAEEPKKEEKSEEESDEELGFSLFDDN) are disordered. Residues 98-114 (SEEESDEELGFSLFDDN) are compositionally biased toward acidic residues.

This sequence belongs to the eukaryotic ribosomal protein P1/P2 family. P1 and P2 exist as dimers at the large ribosomal subunit. In terms of processing, phosphorylated.

Its function is as follows. Plays an important role in the elongation step of protein synthesis. The polypeptide is Large ribosomal subunit protein P2 (Parthenium argentatum (Guayule rubber plant)).